A 357-amino-acid chain; its full sequence is Fructose-1,6-bisphosphatase class 1 3 (357 aa).

Mg(2+)-binding residues include glutamate 94, aspartate 116, leucine 118, and aspartate 119. Substrate-binding positions include 119-122 (DGSS) and asparagine 211. Glutamate 283 contacts Mg(2+).

Belongs to the FBPase class 1 family. Homotetramer. Mg(2+) serves as cofactor.

The protein resides in the cytoplasm. It catalyses the reaction beta-D-fructose 1,6-bisphosphate + H2O = beta-D-fructose 6-phosphate + phosphate. It functions in the pathway carbohydrate biosynthesis; Calvin cycle. The polypeptide is Fructose-1,6-bisphosphatase class 1 3 (Methylibium petroleiphilum (strain ATCC BAA-1232 / LMG 22953 / PM1)).